We begin with the raw amino-acid sequence, 789 residues long: Glycerol-3-phosphate acyltransferase (789 aa).

The short motif at 276-281 is the HXXXXD motif element; sequence HRSYID.

It belongs to the GPAT/DAPAT family.

Its subcellular location is the cell membrane. The enzyme catalyses sn-glycerol 3-phosphate + an acyl-CoA = a 1-acyl-sn-glycero-3-phosphate + CoA. It functions in the pathway phospholipid metabolism; CDP-diacylglycerol biosynthesis; CDP-diacylglycerol from sn-glycerol 3-phosphate: step 1/3. This chain is Glycerol-3-phosphate acyltransferase, found in Mycobacterium bovis (strain ATCC BAA-935 / AF2122/97).